A 327-amino-acid polypeptide reads, in one-letter code: Malate dehydrogenase (327 aa).

An NAD(+)-binding site is contributed by 12–18; the sequence is GAAGQIA. Substrate contacts are provided by Arg-93 and Arg-99. NAD(+) contacts are provided by residues Asn-106, Gln-113, and 130–132; that span reads VGN. Substrate contacts are provided by Asn-132 and Arg-163. His-188 acts as the Proton acceptor in catalysis.

It belongs to the LDH/MDH superfamily. MDH type 2 family.

It carries out the reaction (S)-malate + NAD(+) = oxaloacetate + NADH + H(+). Functionally, catalyzes the reversible oxidation of malate to oxaloacetate. This is Malate dehydrogenase from Acidiphilium cryptum (strain JF-5).